A 341-amino-acid chain; its full sequence is Hygromycin-B 4-O-kinase (341 aa).

The active-site Proton acceptor is Asp198.

It belongs to the aminoglycoside phosphotransferase family.

The catalysed reaction is hygromycin B + ATP = 4-O-phosphohygromycin B + ADP + H(+). Functionally, the aminoglycoside phosphotransferases achieve inactivation of their antibiotic substrates by phosphorylation. Only phosphorylates hygromycin and closely related compounds such as demethyl analogs and destomycin. This chain is Hygromycin-B 4-O-kinase (hph), found in Escherichia coli.